The chain runs to 250 residues: Probable transcriptional regulatory protein Nther_1800 (250 aa).

This sequence belongs to the TACO1 family.

The protein localises to the cytoplasm. The chain is Probable transcriptional regulatory protein Nther_1800 from Natranaerobius thermophilus (strain ATCC BAA-1301 / DSM 18059 / JW/NM-WN-LF).